A 221-amino-acid polypeptide reads, in one-letter code: MAYSKNFSIEELRFDNKGLIPAIAQDWLDGSILMLAWMNKESLNKTLETRNVHYWSRSRSEIWRKGATSGSTQFLKEIRFDCDNDALVLSIEQNGSGACHTGEKSCFFNEIDSISMNKTAKKTSPFSNICSELFDTLHERSINPLEKSYTNHLLTKGSNTILKKIGEETAEFIMACKDNDKDEIANEASDIIYHLQVALIYKGVKWRDVLNVLESRRGKNN.

The segment at 1–129 is phosphoribosyl-AMP cyclohydrolase; the sequence is MAYSKNFSIE…AKKTSPFSNI (129 aa). The interval 130-221 is phosphoribosyl-ATP pyrophosphohydrolase; it reads CSELFDTLHE…VLESRRGKNN (92 aa).

The protein in the N-terminal section; belongs to the PRA-CH family. It in the C-terminal section; belongs to the PRA-PH family.

Its subcellular location is the cytoplasm. The catalysed reaction is 1-(5-phospho-beta-D-ribosyl)-ATP + H2O = 1-(5-phospho-beta-D-ribosyl)-5'-AMP + diphosphate + H(+). It carries out the reaction 1-(5-phospho-beta-D-ribosyl)-5'-AMP + H2O = 1-(5-phospho-beta-D-ribosyl)-5-[(5-phospho-beta-D-ribosylamino)methylideneamino]imidazole-4-carboxamide. It functions in the pathway amino-acid biosynthesis; L-histidine biosynthesis; L-histidine from 5-phospho-alpha-D-ribose 1-diphosphate: step 2/9. Its pathway is amino-acid biosynthesis; L-histidine biosynthesis; L-histidine from 5-phospho-alpha-D-ribose 1-diphosphate: step 3/9. The polypeptide is Histidine biosynthesis bifunctional protein HisIE (Prochlorococcus marinus subsp. pastoris (strain CCMP1986 / NIES-2087 / MED4)).